We begin with the raw amino-acid sequence, 191 residues long: Photosystem I assembly protein Ycf4 (191 aa).

A run of 2 helical transmembrane segments spans residues 33 to 53 (LLAV…LSSY) and 74 to 94 (LVMG…WAMI).

The protein belongs to the Ycf4 family.

It localises to the cellular thylakoid membrane. Functionally, seems to be required for the assembly of the photosystem I complex. In Prochlorococcus marinus (strain MIT 9303), this protein is Photosystem I assembly protein Ycf4.